A 225-amino-acid polypeptide reads, in one-letter code: Ethylene-responsive transcription factor 3 (225 aa).

A compositionally biased stretch (low complexity) spans 1 to 12 (MRRGRAAAAPAP). 2 disordered regions span residues 1–29 (MRRG…IRFR) and 82–193 (NFPL…NIAS). Residues 27 to 84 (RFRGVRKRPWGRFAAEIRDPWKKTRVWLGTFDSAEDAARAYDAAARALRGPKAKTNFP) constitute a DNA-binding region (AP2/ERF). Positions 118–134 (SQRPTSSSMSSTVESFS) are enriched in low complexity. Residues 176 to 185 (DHGDCEKEND) show a composition bias toward basic and acidic residues. Positions 202–208 (FDLNLPP) match the EAR-like (transcriptional repression) motif.

This sequence belongs to the ethylene-response factor family. Class 2 subfamily.

It is found in the nucleus. Functionally, transcription factor that binds to the GCC-box pathogenesis-related promoter element. Involved in the regulation of gene expression by stress factors and by components of stress signal transduction pathways. Probably acts as a transcriptional repressor and may regulate other AtERFs. The polypeptide is Ethylene-responsive transcription factor 3 (ERF3) (Nicotiana tabacum (Common tobacco)).